Reading from the N-terminus, the 301-residue chain is Ribonuclease HIII (301 aa).

The region spanning 88 to 301 (WSVLGSDEVG…TQKARQLARQ (214 aa)) is the RNase H type-2 domain. The a divalent metal cation site is built by D94, E95, and D197.

Belongs to the RNase HII family. RnhC subfamily. Mn(2+) is required as a cofactor. Mg(2+) serves as cofactor.

It localises to the cytoplasm. The enzyme catalyses Endonucleolytic cleavage to 5'-phosphomonoester.. Endonuclease that specifically degrades the RNA of RNA-DNA hybrids. This chain is Ribonuclease HIII, found in Limosilactobacillus fermentum (strain NBRC 3956 / LMG 18251) (Lactobacillus fermentum).